The sequence spans 580 residues: XK-related protein 7 (580 aa).

Positions 1-22 are enriched in low complexity; it reads MAAKSDGAAAVAGPGPEGPAGA. The disordered stretch occupies residues 1–28; it reads MAAKSDGAAAVAGPGPEGPAGADRGGAG. Helical transmembrane passes span 59–79, 89–109, 260–280, 303–323, 326–346, 355–375, 384–404, and 415–435; these read WVLC…WLAA, YFGL…LLSF, LLTA…LASY, VLWH…FASV, LYFG…VIQG, WEEI…WFNV, VTLY…FWYS, and LILV…MCVY. The segment at 470–516 is disordered; sequence TSPPRSLPRTTGAERDGAAVGGERAGTPTPPVFQVRPGLPPTPVARP.

It belongs to the XK family.

It localises to the cell membrane. The polypeptide is XK-related protein 7 (Rattus norvegicus (Rat)).